Here is a 763-residue protein sequence, read N- to C-terminus: Phosphoglycerol transferase I (763 aa).

4 consecutive transmembrane segments (helical) span residues 1–21, 26–46, 77–97, and 108–128; these read MSELLSFALFLASVLIYAWKA, WWFAATLTVLGLFVVLNITLF, ILPGIGIVLGLTAVFGALGWI, and FGYSLLALLLALGSVDASPAF.

The protein belongs to the OpgB family.

The protein localises to the cell inner membrane. The catalysed reaction is a phosphatidylglycerol + a membrane-derived-oligosaccharide D-glucose = a 1,2-diacyl-sn-glycerol + a membrane-derived-oligosaccharide 6-(glycerophospho)-D-glucose.. Its pathway is glycan metabolism; osmoregulated periplasmic glucan (OPG) biosynthesis. Its function is as follows. Transfers a phosphoglycerol residue from phosphatidylglycerol to the membrane-bound nascent glucan backbones. In Escherichia coli O127:H6 (strain E2348/69 / EPEC), this protein is Phosphoglycerol transferase I.